Reading from the N-terminus, the 202-residue chain is Imidazoleglycerol-phosphate dehydratase (202 aa).

It belongs to the imidazoleglycerol-phosphate dehydratase family.

The protein localises to the cytoplasm. The enzyme catalyses D-erythro-1-(imidazol-4-yl)glycerol 3-phosphate = 3-(imidazol-4-yl)-2-oxopropyl phosphate + H2O. It participates in amino-acid biosynthesis; L-histidine biosynthesis; L-histidine from 5-phospho-alpha-D-ribose 1-diphosphate: step 6/9. The chain is Imidazoleglycerol-phosphate dehydratase from Sinorhizobium fredii (strain NBRC 101917 / NGR234).